Consider the following 303-residue polypeptide: Phosphoribosylaminoimidazole-succinocarboxamide synthase (303 aa).

Belongs to the SAICAR synthetase family.

The enzyme catalyses 5-amino-1-(5-phospho-D-ribosyl)imidazole-4-carboxylate + L-aspartate + ATP = (2S)-2-[5-amino-1-(5-phospho-beta-D-ribosyl)imidazole-4-carboxamido]succinate + ADP + phosphate + 2 H(+). Its pathway is purine metabolism; IMP biosynthesis via de novo pathway; 5-amino-1-(5-phospho-D-ribosyl)imidazole-4-carboxamide from 5-amino-1-(5-phospho-D-ribosyl)imidazole-4-carboxylate: step 1/2. This Pichia angusta (Yeast) protein is Phosphoribosylaminoimidazole-succinocarboxamide synthase (ADE1).